Here is a 99-residue protein sequence, read N- to C-terminus: MSAAAQLKSVDYEVFGRVQGVCFRMYTEGEAKKIGVVGWVKNTSKGTVTGQVQGPEEKVNSMKSWLSKVGSPSSRIDRTNFSNEKSISKLEYSNFSIRY.

An N-acetylserine modification is found at S2. An Acylphosphatase-like domain is found at 9-99 (SVDYEVFGRV…LEYSNFSIRY (91 aa)). Catalysis depends on residues R24 and N42. S93 is modified (phosphoserine).

The protein belongs to the acylphosphatase family.

It carries out the reaction an acyl phosphate + H2O = a carboxylate + phosphate + H(+). Functionally, its physiological role is not yet clear. The chain is Acylphosphatase-2 (ACYP2) from Cavia porcellus (Guinea pig).